Consider the following 645-residue polypeptide: Serine/threonine-protein kinase BUR1 (645 aa).

Positions 55 to 379 (YREEEKLGQG…AMKAKKHPFF (325 aa)) constitute a Protein kinase domain. Residues 61–69 (LGQGTFGEV) and K84 each bind ATP. D208 (proton acceptor) is an active-site residue. 3 disordered regions span residues 407-428 (EMNE…STDN), 442-513 (ASIP…KYPA), and 533-645 (RYRN…ADYY). Composition is skewed to polar residues over residues 409 to 428 (NESM…STDN) and 457 to 474 (IPAQ…TQNI). Pro residues predominate over residues 477–486 (EPIPTAPLPK). Residues 578–598 (NRYQNQDYNTSRNTGYNQYSQ) show a composition bias toward polar residues.

This sequence belongs to the protein kinase superfamily. CMGC Ser/Thr protein kinase family. CDC2/CDKX subfamily.

The protein localises to the nucleus. It catalyses the reaction L-seryl-[protein] + ATP = O-phospho-L-seryl-[protein] + ADP + H(+). The enzyme catalyses L-threonyl-[protein] + ATP = O-phospho-L-threonyl-[protein] + ADP + H(+). It carries out the reaction [DNA-directed RNA polymerase] + ATP = phospho-[DNA-directed RNA polymerase] + ADP + H(+). Functionally, serine/threonine-protein kinase involved in transcription regulation. Phosphorylates the UBC2/RAD6 ubiquitin-conjugating enzyme (E2), leading to monoubiquitination of histone H2B and the silencing of telomeric-associated genes. Also required for histone H3 methylation. Necessary for the recovery from pheromone-induced growth arrest in the cell cycle G1 phase. The polypeptide is Serine/threonine-protein kinase BUR1 (BUR1) (Kluyveromyces lactis (strain ATCC 8585 / CBS 2359 / DSM 70799 / NBRC 1267 / NRRL Y-1140 / WM37) (Yeast)).